The following is a 495-amino-acid chain: Lysine--tRNA ligase (495 aa).

Positions 406 and 413 each coordinate Mg(2+).

Belongs to the class-II aminoacyl-tRNA synthetase family. As to quaternary structure, homodimer. Mg(2+) is required as a cofactor.

The protein localises to the cytoplasm. It carries out the reaction tRNA(Lys) + L-lysine + ATP = L-lysyl-tRNA(Lys) + AMP + diphosphate. The sequence is that of Lysine--tRNA ligase from Staphylococcus aureus (strain MW2).